We begin with the raw amino-acid sequence, 380 residues long: Transcription factor SOX-7 (380 aa).

Residues 24–43 are disordered; it reads SDGLSPPAVPRPSGDKSSES. The HMG box DNA-binding region spans 45 to 113; sequence IRRPMNAFMV…QHMQDYPNYK (69 aa). The interval 139–167 is disordered; that stretch reads SRDQNTLPEKNGIGRGEKEDRGEYSPGAT. Residues 260 to 380 enclose the Sox C-terminal domain; the sequence is VSMMSSVSGC…ATYYNSYSVS (121 aa). Residues 323–328 form a required for beta-catenin-binding region; the sequence is EFDQYL.

Interacts with CTNNB1/beta-catenin; this interaction may lead to the proteasomal degradation of active CTNNB1 and thus inhibition of Wnt/beta-catenin-stimulated transcription. Predominantly expressed in ovary, lung and heart. In the ovary, restricted to oocytes (at protein level). Present both in mesenchymal and epithelial cells in some adult tissues, including ear.

The protein resides in the nucleus. It is found in the cytoplasm. In terms of biological role, binds to and activates the CDH5 promoter, hence plays a role in the transcriptional regulation of genes expressed in the hemogenic endothelium and blocks further differentiation into blood precursors. May be required for the survival of both hematopoietic and endothelial precursors during specification. May play a role in skeletal myogenesis and up-regulate the expression of muscle markers, such as PAX3/PAX7 and Meox1. Competes with GATA4 for binding and activation of the FGF3 promoter. Represses Wnt/beta-catenin-stimulated transcription. Probably acts by targeting CTNNB1 to proteasomal degradation. Binds the DNA sequence 5'-AACAAT-3'. This chain is Transcription factor SOX-7 (Sox7), found in Mus musculus (Mouse).